The primary structure comprises 593 residues: MNQDAVAKALLGMAEALRTQDPPKLKMAIKCARSTLSMEISDEMKAICNLQLGKLLFFYTDNFELAKNHLQCAYDKMSAMGTFYTRDKMNAISMLADLHIHYQQWPLTSIKATIRHEITTTRGFPALSNKLMFQLIELMKIDKDVEGAIEMCQLAINSSHADPKMELYFRIAKTLVTYQLMHEEPDISDVTRIGSMIKVMENSTTSDKAHLECIKDFYVCTKLAYMFYEGKSRTSRQLLRQIQKSQTSGETKIHGIRWLGEPSITLLACVMNQICALVQSNTDRVEKYYHLVIKHADEIIFKSTRSPQEPGVVRCINMIKMTTLEMMACCNVLACRPQKTLHNVRDMLEWSNRTSGPLLTRYFTPHIHYILGLQCCYFRQHENAENHFRAAMKKLHKEDITAHNTMALLNLNLAITYLNQLKMADYYEVSENLTAPKISSCSQMLKNNVKLLSAFFAYITNKLNECKLLSHEVLDDSKAEDFFRLHGLGLLLLSLVTDVDEKGVRPTVDWSKKSHDHVVILFSHSLYEKILLAAGYDPKSELMKMVVSEQLASRRMLSVENLTPLVANMPASKLLQWFDGDPFKLLPRDETVL.

Belongs to the SCC4/mau-2 family. As to quaternary structure, may heterodimerize with scc-2/SCC2 to form the cohesin loading complex.

Its subcellular location is the nucleus. The protein localises to the nucleoplasm. The protein resides in the cytoplasm. Plays an important role in the loading of the cohesin complex on to DNA. Forms a heterodimeric complex (also known as cohesin loading complex) with scc-2/SCC2 which mediates the loading of the cohesin complex onto chromatin. Required for normal development until the fourth larval stage. Functions cell autonomously to guide migrations during the development of the nervous system. Participates in the guidance of mechanosensory neuron AVM by a slt-1-independent mechanism. Regulates chromosome segregation in early embryos. The sequence is that of Maternal uncoordinated protein 2 from Caenorhabditis elegans.